Reading from the N-terminus, the 282-residue chain is Adenosylcobinamide-GDP ribazoletransferase (282 aa).

A run of 6 helical transmembrane segments spans residues 47-67 (GVGILVGVMAALVYGLIQALL), 72-92 (FTPLVAAVLSTAATVLLTGGF), 124-144 (AFGAMALMLALLGKTALLAML), 167-187 (AALLTGHVVSRGLPLLLIWLL), 208-228 (GSLLVAFIWSFVVLALAGLAL), and 231-251 (ISLIVACSFSLLALLWMGALF).

It belongs to the CobS family. Requires Mg(2+) as cofactor.

The protein localises to the cell inner membrane. It carries out the reaction alpha-ribazole + adenosylcob(III)inamide-GDP = adenosylcob(III)alamin + GMP + H(+). It catalyses the reaction alpha-ribazole 5'-phosphate + adenosylcob(III)inamide-GDP = adenosylcob(III)alamin 5'-phosphate + GMP + H(+). It functions in the pathway cofactor biosynthesis; adenosylcobalamin biosynthesis; adenosylcobalamin from cob(II)yrinate a,c-diamide: step 7/7. Its function is as follows. Joins adenosylcobinamide-GDP and alpha-ribazole to generate adenosylcobalamin (Ado-cobalamin). Also synthesizes adenosylcobalamin 5'-phosphate from adenosylcobinamide-GDP and alpha-ribazole 5'-phosphate. The chain is Adenosylcobinamide-GDP ribazoletransferase from Polaromonas sp. (strain JS666 / ATCC BAA-500).